The sequence spans 141 residues: Cystatin (141 aa).

The N-terminal stretch at 1-26 (MVHSQLPVAAPLRLLCALLLLPSATM) is a signal peptide. Residues 29-129 (GGLSPRSVTD…CHFQVWSRPW (101 aa)) enclose the Cystatin domain. Positions 73–77 (QVVAG) match the Secondary area of contact motif. 2 cysteine pairs are disulfide-bonded: Cys-91–Cys-107 and Cys-120–Cys-140.

Belongs to the cystatin family. Expressed at a low level by the venom gland (at protein level).

The protein resides in the secreted. Its function is as follows. Inhibits various C1 cysteine proteases including cathepsin L, papain and cathepsin B. This protein has no toxic activity and its function in the venom is unknown. It may play a role as a housekeeping or regulatory protein. The protein is Cystatin of Oxyuranus scutellatus scutellatus (Australian taipan).